The chain runs to 356 residues: S-adenosylmethionine:tRNA ribosyltransferase-isomerase (356 aa).

This sequence belongs to the QueA family. Monomer.

It localises to the cytoplasm. It carries out the reaction 7-aminomethyl-7-carbaguanosine(34) in tRNA + S-adenosyl-L-methionine = epoxyqueuosine(34) in tRNA + adenine + L-methionine + 2 H(+). Its pathway is tRNA modification; tRNA-queuosine biosynthesis. Functionally, transfers and isomerizes the ribose moiety from AdoMet to the 7-aminomethyl group of 7-deazaguanine (preQ1-tRNA) to give epoxyqueuosine (oQ-tRNA). This Escherichia coli (strain 55989 / EAEC) protein is S-adenosylmethionine:tRNA ribosyltransferase-isomerase.